The sequence spans 286 residues: Protein WVD2-like 1 (286 aa).

Residues 31-101 are disordered; that stretch reads ETDEEFEVKE…ENKKHIDDED (71 aa). Position 32 is a phosphothreonine (Thr-32). Over residues 38–47 the composition is skewed to basic and acidic residues; that stretch reads VKECTEEKSL. Residues 131-182 adopt a coiled-coil conformation; sequence AQRAEKRKEYYQKLEEKNQALEAERNELEQRQKDEQEAALKQLRKNLKFKAK. Residues 186-286 are disordered; the sequence is NFYYEAPPAK…KPVNESSEEA (101 aa). Residues 234–247 are compositionally biased toward polar residues; that stretch reads TVSNRNRHSTGTVQ.

It belongs to the TPX2 family.

It is found in the cytoplasm. The protein resides in the cytoskeleton. Its function is as follows. Microtubule-associated protein (MAP) that regulates the orientation of interphase cortical microtubules. Modulates both rotational polarity and anisotropic cell expansion during organ growth. Promotes clockwise root and etiolated hypocotyls coiling, clockwise leaf curling, but left-handed petiole twisting. The protein is Protein WVD2-like 1 (WDL1) of Arabidopsis thaliana (Mouse-ear cress).